A 426-amino-acid polypeptide reads, in one-letter code: Glutamyl-tRNA reductase (426 aa).

Substrate-binding positions include 52 to 55, Ser110, 115 to 117, and Gln121; these read TCNR and EYE. Cys53 acts as the Nucleophile in catalysis. Residue 190-195 participates in NADP(+) binding; sequence GAGEMG.

It belongs to the glutamyl-tRNA reductase family. In terms of assembly, homodimer.

It carries out the reaction (S)-4-amino-5-oxopentanoate + tRNA(Glu) + NADP(+) = L-glutamyl-tRNA(Glu) + NADPH + H(+). It participates in porphyrin-containing compound metabolism; protoporphyrin-IX biosynthesis; 5-aminolevulinate from L-glutamyl-tRNA(Glu): step 1/2. In terms of biological role, catalyzes the NADPH-dependent reduction of glutamyl-tRNA(Glu) to glutamate 1-semialdehyde (GSA). The polypeptide is Glutamyl-tRNA reductase (Saccharolobus islandicus (strain Y.N.15.51 / Yellowstone #2) (Sulfolobus islandicus)).